The chain runs to 185 residues: Ribosome-recycling factor (185 aa).

This sequence belongs to the RRF family.

Its subcellular location is the cytoplasm. Responsible for the release of ribosomes from messenger RNA at the termination of protein biosynthesis. May increase the efficiency of translation by recycling ribosomes from one round of translation to another. In Clostridium botulinum (strain Eklund 17B / Type B), this protein is Ribosome-recycling factor.